The chain runs to 447 residues: N-succinylarginine dihydrolase (447 aa).

Residues 19–28 (AGLSFGNEAS), Asn110, and 137–138 (HR) contribute to the substrate site. The active site involves Glu174. A substrate-binding site is contributed by Arg214. The active site involves His250. Asp252 and Asn365 together coordinate substrate. Cys371 acts as the Nucleophile in catalysis.

The protein belongs to the succinylarginine dihydrolase family. Homodimer.

It catalyses the reaction N(2)-succinyl-L-arginine + 2 H2O + 2 H(+) = N(2)-succinyl-L-ornithine + 2 NH4(+) + CO2. It functions in the pathway amino-acid degradation; L-arginine degradation via AST pathway; L-glutamate and succinate from L-arginine: step 2/5. Catalyzes the hydrolysis of N(2)-succinylarginine into N(2)-succinylornithine, ammonia and CO(2). In Acinetobacter baumannii (strain SDF), this protein is N-succinylarginine dihydrolase.